The primary structure comprises 212 residues: Imidazole glycerol phosphate synthase subunit HisH 2 (212 aa).

Residues 3 to 212 (RVAIIDYGIN…LMSNFLQWNP (210 aa)) form the Glutamine amidotransferase type-1 domain. Catalysis depends on Cys-82, which acts as the Nucleophile. Catalysis depends on residues His-192 and Glu-194.

As to quaternary structure, heterodimer of HisH and HisF.

The protein localises to the cytoplasm. It carries out the reaction 5-[(5-phospho-1-deoxy-D-ribulos-1-ylimino)methylamino]-1-(5-phospho-beta-D-ribosyl)imidazole-4-carboxamide + L-glutamine = D-erythro-1-(imidazol-4-yl)glycerol 3-phosphate + 5-amino-1-(5-phospho-beta-D-ribosyl)imidazole-4-carboxamide + L-glutamate + H(+). The enzyme catalyses L-glutamine + H2O = L-glutamate + NH4(+). The protein operates within amino-acid biosynthesis; L-histidine biosynthesis; L-histidine from 5-phospho-alpha-D-ribose 1-diphosphate: step 5/9. In terms of biological role, IGPS catalyzes the conversion of PRFAR and glutamine to IGP, AICAR and glutamate. The HisH subunit provides the glutamine amidotransferase activity that produces the ammonia necessary to HisF for the synthesis of IGP and AICAR. This Nitrobacter winogradskyi (strain ATCC 25391 / DSM 10237 / CIP 104748 / NCIMB 11846 / Nb-255) protein is Imidazole glycerol phosphate synthase subunit HisH 2.